Here is a 251-residue protein sequence, read N- to C-terminus: Putative cysteine-rich repeat secretory protein 36 (251 aa).

The first 28 residues, M1–S28, serve as a signal peptide directing secretion. 2 Gnk2-homologous domains span residues Y35 to P139 and Y144 to F248.

The protein belongs to the cysteine-rich repeat secretory protein family.

It is found in the secreted. The chain is Putative cysteine-rich repeat secretory protein 36 (CRRSP36) from Arabidopsis thaliana (Mouse-ear cress).